The sequence spans 119 residues: Large ribosomal subunit protein uL18 (119 aa).

Belongs to the universal ribosomal protein uL18 family. In terms of assembly, part of the 50S ribosomal subunit; part of the 5S rRNA/L5/L18/L25 subcomplex. Contacts the 5S and 23S rRNAs.

Functionally, this is one of the proteins that bind and probably mediate the attachment of the 5S RNA into the large ribosomal subunit, where it forms part of the central protuberance. The protein is Large ribosomal subunit protein uL18 of Dinoroseobacter shibae (strain DSM 16493 / NCIMB 14021 / DFL 12).